A 246-amino-acid polypeptide reads, in one-letter code: UPF0736 protein GWCH70_0753 (246 aa).

This sequence belongs to the UPF0736 family.

The polypeptide is UPF0736 protein GWCH70_0753 (Geobacillus sp. (strain WCH70)).